We begin with the raw amino-acid sequence, 133 residues long: NADPH-dependent 7-cyano-7-deazaguanine reductase (133 aa).

Cys46 serves as the catalytic Thioimide intermediate. The active-site Proton donor is the Asp53. Substrate-binding positions include 68-70 and 87-88; these read VEL and HE.

This sequence belongs to the GTP cyclohydrolase I family. QueF type 1 subfamily.

It is found in the cytoplasm. The enzyme catalyses 7-aminomethyl-7-carbaguanine + 2 NADP(+) = 7-cyano-7-deazaguanine + 2 NADPH + 3 H(+). It participates in tRNA modification; tRNA-queuosine biosynthesis. Functionally, catalyzes the NADPH-dependent reduction of 7-cyano-7-deazaguanine (preQ0) to 7-aminomethyl-7-deazaguanine (preQ1). The chain is NADPH-dependent 7-cyano-7-deazaguanine reductase from Parasynechococcus marenigrum (strain WH8102).